A 366-amino-acid polypeptide reads, in one-letter code: UDP-N-acetylglucosamine--N-acetylmuramyl-(pentapeptide) pyrophosphoryl-undecaprenol N-acetylglucosamine transferase (366 aa).

UDP-N-acetyl-alpha-D-glucosamine is bound by residues Thr-14 to Gly-16, Asn-125, Arg-168, Ser-196, and Gln-297.

The protein belongs to the glycosyltransferase 28 family. MurG subfamily.

Its subcellular location is the cell inner membrane. The enzyme catalyses di-trans,octa-cis-undecaprenyl diphospho-N-acetyl-alpha-D-muramoyl-L-alanyl-D-glutamyl-meso-2,6-diaminopimeloyl-D-alanyl-D-alanine + UDP-N-acetyl-alpha-D-glucosamine = di-trans,octa-cis-undecaprenyl diphospho-[N-acetyl-alpha-D-glucosaminyl-(1-&gt;4)]-N-acetyl-alpha-D-muramoyl-L-alanyl-D-glutamyl-meso-2,6-diaminopimeloyl-D-alanyl-D-alanine + UDP + H(+). It participates in cell wall biogenesis; peptidoglycan biosynthesis. Cell wall formation. Catalyzes the transfer of a GlcNAc subunit on undecaprenyl-pyrophosphoryl-MurNAc-pentapeptide (lipid intermediate I) to form undecaprenyl-pyrophosphoryl-MurNAc-(pentapeptide)GlcNAc (lipid intermediate II). This Rhodopseudomonas palustris (strain ATCC BAA-98 / CGA009) protein is UDP-N-acetylglucosamine--N-acetylmuramyl-(pentapeptide) pyrophosphoryl-undecaprenol N-acetylglucosamine transferase.